The primary structure comprises 214 residues: Late embryogenesis abundant protein At1g64065 (214 aa).

Residues 41-61 traverse the membrane as a helical segment; the sequence is VYSLTIIVIIFALCLILSSIF.

This sequence belongs to the LEA type 2 family.

The protein localises to the membrane. The chain is Late embryogenesis abundant protein At1g64065 from Arabidopsis thaliana (Mouse-ear cress).